The primary structure comprises 475 residues: Methionine aminopeptidase 2-1 (475 aa).

Residues 1 to 12 (MGSKSPEGHRQT) are compositionally biased toward basic and acidic residues. The segment at 1-97 (MGSKSPEGHR…LKQSSPPRVL (97 aa)) is disordered. Acidic residues predominate over residues 44–57 (NLDDDNDDDGEANE). A compositionally biased stretch (basic residues) spans 70–83 (KKKKRKRSKKKTKK). Position 211 (His-211) interacts with substrate. A divalent metal cation is bound by residues Asp-232, Asp-243, and His-312. His-320 lines the substrate pocket. Positions 345 and 456 each coordinate a divalent metal cation.

Belongs to the peptidase M24A family. Methionine aminopeptidase eukaryotic type 2 subfamily. Co(2+) is required as a cofactor. Requires Zn(2+) as cofactor. Mn(2+) serves as cofactor. It depends on Fe(2+) as a cofactor.

The protein resides in the cytoplasm. It carries out the reaction Release of N-terminal amino acids, preferentially methionine, from peptides and arylamides.. Functionally, cotranslationally removes the N-terminal methionine from nascent proteins. The N-terminal methionine is often cleaved when the second residue in the primary sequence is small and uncharged (Met-Ala-, Cys, Gly, Pro, Ser, Thr, or Val). The sequence is that of Methionine aminopeptidase 2-1 from Aspergillus niger (strain ATCC MYA-4892 / CBS 513.88 / FGSC A1513).